A 181-amino-acid polypeptide reads, in one-letter code: Crossover junction endodeoxyribonuclease RuvC (181 aa).

Active-site residues include aspartate 7, glutamate 67, and aspartate 139. Mg(2+) contacts are provided by aspartate 7, glutamate 67, and aspartate 139.

This sequence belongs to the RuvC family. Homodimer which binds Holliday junction (HJ) DNA. The HJ becomes 2-fold symmetrical on binding to RuvC with unstacked arms; it has a different conformation from HJ DNA in complex with RuvA. In the full resolvosome a probable DNA-RuvA(4)-RuvB(12)-RuvC(2) complex forms which resolves the HJ. The cofactor is Mg(2+).

Its subcellular location is the cytoplasm. It catalyses the reaction Endonucleolytic cleavage at a junction such as a reciprocal single-stranded crossover between two homologous DNA duplexes (Holliday junction).. Its function is as follows. The RuvA-RuvB-RuvC complex processes Holliday junction (HJ) DNA during genetic recombination and DNA repair. Endonuclease that resolves HJ intermediates. Cleaves cruciform DNA by making single-stranded nicks across the HJ at symmetrical positions within the homologous arms, yielding a 5'-phosphate and a 3'-hydroxyl group; requires a central core of homology in the junction. The consensus cleavage sequence is 5'-(A/T)TT(C/G)-3'. Cleavage occurs on the 3'-side of the TT dinucleotide at the point of strand exchange. HJ branch migration catalyzed by RuvA-RuvB allows RuvC to scan DNA until it finds its consensus sequence, where it cleaves and resolves the cruciform DNA. This Ralstonia pickettii (strain 12J) protein is Crossover junction endodeoxyribonuclease RuvC.